The sequence spans 225 residues: Ribonuclease 3 (225 aa).

The 124-residue stretch at 4–127 (IEKLEQSLTY…IIGAIHLEAG (124 aa)) folds into the RNase III domain. Residue E40 coordinates Mg(2+). The active site involves D44. The Mg(2+) site is built by D113 and E116. E116 is an active-site residue. The DRBM domain maps to 154-223 (DYKTKLQEIT…AKIALEKLGS (70 aa)).

Belongs to the ribonuclease III family. In terms of assembly, homodimer. Requires Mg(2+) as cofactor.

The protein localises to the cytoplasm. The catalysed reaction is Endonucleolytic cleavage to 5'-phosphomonoester.. Functionally, digests double-stranded RNA. Involved in the processing of primary rRNA transcript to yield the immediate precursors to the large and small rRNAs (23S and 16S). Processes some mRNAs, and tRNAs when they are encoded in the rRNA operon. Processes pre-crRNA and tracrRNA of type II CRISPR loci if present in the organism. This is Ribonuclease 3 from Campylobacter jejuni subsp. doylei (strain ATCC BAA-1458 / RM4099 / 269.97).